A 511-amino-acid chain; its full sequence is Aminotransferase FGSG_17085 (511 aa).

165 to 166 (GA) provides a ligand contact to pyridoxal 5'-phosphate. Y200 is a substrate binding site. Residue D310 participates in pyridoxal 5'-phosphate binding. The residue at position 339 (K339) is an N6-(pyridoxal phosphate)lysine. A substrate-binding site is contributed by G371. Pyridoxal 5'-phosphate is bound at residue 372-373 (HT).

The protein belongs to the class-III pyridoxal-phosphate-dependent aminotransferase family. The cofactor is pyridoxal 5'-phosphate.

It functions in the pathway secondary metabolite biosynthesis. Aminotransferase; part of the gene cluster that mediates the biosynthesis of the lipopeptide fusaristatin A. Fusaristatin A consists of a polyketide chain linked to three amino acid residues glutamine (Gln), dehydroalanine (dehydro-Ala), and beta-aminoisobutyric acid. The biosynthesis starts with formation of a linear polyketide chain by the highly reducing polyketide synthase PKS6. The gene cluster does not contain an acyl-CoA ligase or an acyl-transferase, and it is therefore predicted that the polyketide is transferred directly to the nonribosomal peptide synthetase NRPS7. Modules 1-3 from NRPS7 incorporate dehydro-Ala, Gln, and beta-aminoisobutyric acid in the compound, which is released by cyclization. The beta-aminoisobutyric acid units are most likely not freely available to the NRPS, but can be synthesized from thymine, which requires a dehydrogenase, a monooxygenase, and an aminotransferase. The fusaristatin A cluster contains a cytochrome P450 monooxygenase (FGSG_08207) and an aminotransferase (FGSG_17085), which theoretically can perform two of the enzymatic steps. The enzymes may however also be involved in biosynthesis of dehydroalanine or modification of the polyketide. The dehydro-Ala residue can be a result of cyclization, where serine is dehydrated. The last gene of the cluster encodes a protein with an A/B barrel domain found in variable enzymes, which hampers functional prediction. The polypeptide is Aminotransferase FGSG_17085 (Gibberella zeae (strain ATCC MYA-4620 / CBS 123657 / FGSC 9075 / NRRL 31084 / PH-1) (Wheat head blight fungus)).